The chain runs to 488 residues: Germacrene A hydroxylase (488 aa).

Residues 1–6 (MELSLT) lie on the Cytoplasmic side of the membrane. The chain crosses the membrane as a helical; Signal-anchor for type II membrane protein span at residues 7 to 23 (TSIALATIVLILYKLAT). The Lumenal portion of the chain corresponds to 24–488 (RPKSNKKRLP…KTELILVPSF (465 aa)). N-linked (GlcNAc...) asparagine glycans are attached at residues N260 and N379. C432 is a binding site for heme.

The protein belongs to the cytochrome P450 family. Heme is required as a cofactor.

It localises to the endoplasmic reticulum membrane. The protein resides in the microsome membrane. The enzyme catalyses (+)-(R)-germacrene A + 3 reduced [NADPH--hemoprotein reductase] + 3 O2 = germacra-1(10),4,11(13)-trien-12-oate + 3 oxidized [NADPH--hemoprotein reductase] + 4 H2O + 4 H(+). Its pathway is secondary metabolite biosynthesis; terpenoid biosynthesis. Its activity is regulated as follows. Inhibited by cytochrome C, miconazole, aminobenzotriazole, metyrapone and clotrimazole. Involved in the biosynthesis of germacrene-derived sesquiterpene lactones. Catalyzes three consecutive oxidations of germacrene A to produce germacrene A acid. Could also catalyze the three-step oxidation of non-natural substrate amorphadiene to artemisinic acid. Can use beta-elemene as substrate. The protein is Germacrene A hydroxylase of Cichorium intybus (Chicory).